An 819-amino-acid chain; its full sequence is Putative U-box domain-containing protein 53 (819 aa).

Disordered regions lie at residues 208-309 (TSDT…NPQF) and 398-433 (KETE…KEKL). Over residues 223–237 (ERTSSSCSSGSGANS) the composition is skewed to low complexity. Residues 238–260 (DVMSNALKSNPHTLSNKRMQNLP) are compositionally biased toward polar residues. The span at 278–296 (DETKKRSSDAAEEASKRSS) shows a compositional bias: basic and acidic residues. Positions 297 to 307 (PETSRSVSWNP) are enriched in polar residues. The stretch at 395-437 (IAKKETEKFEQKRREEREAAQRREAEMKATHEAKEKEKLEESS) forms a coiled coil. The 269-residue stretch at 460–728 (FSEDLKIGMG…DLEDQILPVL (269 aa)) folds into the Protein kinase domain. ATP-binding positions include 466–474 (IGMGAYGDV) and Lys487. The active-site Proton acceptor is Asp582. The U-box domain maps to 748–819 (QPPSHFFCPL…AIVEWRNRNQ (72 aa)).

This sequence belongs to the protein kinase superfamily. Ser/Thr protein kinase family.

The catalysed reaction is L-seryl-[protein] + ATP = O-phospho-L-seryl-[protein] + ADP + H(+). It carries out the reaction L-threonyl-[protein] + ATP = O-phospho-L-threonyl-[protein] + ADP + H(+). The enzyme catalyses S-ubiquitinyl-[E2 ubiquitin-conjugating enzyme]-L-cysteine + [acceptor protein]-L-lysine = [E2 ubiquitin-conjugating enzyme]-L-cysteine + N(6)-ubiquitinyl-[acceptor protein]-L-lysine.. The protein operates within protein modification; protein ubiquitination. Functionally, functions as an E3 ubiquitin ligase. The protein is Putative U-box domain-containing protein 53 (PUB53) of Arabidopsis thaliana (Mouse-ear cress).